The chain runs to 426 residues: Ornithine aminotransferase (426 aa).

An N6-(pyridoxal phosphate)lysine modification is found at lysine 291.

The protein belongs to the class-III pyridoxal-phosphate-dependent aminotransferase family. Requires pyridoxal 5'-phosphate as cofactor.

The enzyme catalyses a 2-oxocarboxylate + L-ornithine = L-glutamate 5-semialdehyde + an L-alpha-amino acid. It participates in amino-acid biosynthesis; L-proline biosynthesis; L-glutamate 5-semialdehyde from L-ornithine: step 1/1. The polypeptide is Ornithine aminotransferase (Vigna aconitifolia (Moth bean)).